A 174-amino-acid chain; its full sequence is Large ribosomal subunit protein uL18 (174 aa).

This sequence belongs to the universal ribosomal protein uL18 family. Part of the 50S ribosomal subunit. Contacts the 5S and 23S rRNAs.

This is one of the proteins that bind and probably mediate the attachment of the 5S RNA into the large ribosomal subunit, where it forms part of the central protuberance. This chain is Large ribosomal subunit protein uL18, found in Methanosarcina acetivorans (strain ATCC 35395 / DSM 2834 / JCM 12185 / C2A).